Here is an 83-residue protein sequence, read N- to C-terminus: Small ribosomal subunit protein bS16 (83 aa).

This sequence belongs to the bacterial ribosomal protein bS16 family.

The protein is Small ribosomal subunit protein bS16 of Acidovorax ebreus (strain TPSY) (Diaphorobacter sp. (strain TPSY)).